We begin with the raw amino-acid sequence, 270 residues long: 4-hydroxy-tetrahydrodipicolinate reductase (270 aa).

NAD(+) is bound by residues 11-16 (GASGRM) and glutamate 37. Arginine 38 contributes to the NADP(+) binding site. Residues 101-103 (GTT) and 125-128 (APNM) each bind NAD(+). Histidine 158 functions as the Proton donor/acceptor in the catalytic mechanism. Histidine 159 contacts (S)-2,3,4,5-tetrahydrodipicolinate. Catalysis depends on lysine 162, which acts as the Proton donor. 168–169 (GT) provides a ligand contact to (S)-2,3,4,5-tetrahydrodipicolinate.

This sequence belongs to the DapB family.

It is found in the cytoplasm. It catalyses the reaction (S)-2,3,4,5-tetrahydrodipicolinate + NAD(+) + H2O = (2S,4S)-4-hydroxy-2,3,4,5-tetrahydrodipicolinate + NADH + H(+). The catalysed reaction is (S)-2,3,4,5-tetrahydrodipicolinate + NADP(+) + H2O = (2S,4S)-4-hydroxy-2,3,4,5-tetrahydrodipicolinate + NADPH + H(+). It functions in the pathway amino-acid biosynthesis; L-lysine biosynthesis via DAP pathway; (S)-tetrahydrodipicolinate from L-aspartate: step 4/4. Catalyzes the conversion of 4-hydroxy-tetrahydrodipicolinate (HTPA) to tetrahydrodipicolinate. The chain is 4-hydroxy-tetrahydrodipicolinate reductase from Shewanella frigidimarina (strain NCIMB 400).